A 186-amino-acid chain; its full sequence is Ribosome-recycling factor (186 aa).

Belongs to the RRF family.

Its subcellular location is the cytoplasm. Its function is as follows. Responsible for the release of ribosomes from messenger RNA at the termination of protein biosynthesis. May increase the efficiency of translation by recycling ribosomes from one round of translation to another. The polypeptide is Ribosome-recycling factor (Cytophaga hutchinsonii (strain ATCC 33406 / DSM 1761 / CIP 103989 / NBRC 15051 / NCIMB 9469 / D465)).